The following is a 612-amino-acid chain: MTTQAPPTSLLPLSPEQLARLQAAVGEFSPTQMAWLSGYFWGMVNQQPGAVASPAVAAPPPVTVTLISASQTGNARRLAEQLRDDLLAAQLSVNLVNAGDYKFKQIAQERLLVVVASTQGEGEPAEEAVALHKFLFSKKAPKLSETAFAVFGLGDTSYEHFCQAGKDFDSKLAELGAQRLLDRVDADVEYQVQAQQWRQQVVATLQAKVPAQSTAPTQFIAPTQSTTPAAAAITSGGTTTVSPYSKTAPLTAQLSVQQKVTGRNSEKDVRHIEIDLGDSGLRYQPGDALGVWFDNDPALVEELLALLWLKGDEPVSIDGQNMPLAQALLSHLELTQNTTLIVDKYAALSRDETLIALLADKPALQLYAKNTPFVDMVRQAPSDLNADQLVGLLRPLTPRLYSIASSQAETENEVHITVGVVRYDIDGRARSGGASGYLADRLEVDGDIRVFIEHNDNFRLPANPETPVIMIGPGTGIAPFRAFMQQREVDGASGKNWLFFGNPHFTEDFLYQVEWQRYVKEGVLTRIDLAWSRDQAHKIYVQDKLREQGAELWNWIQQGAHIYVCGDANRMAKDVEQVLLDVVALHGAMDAEQADEYLSELRQARRYQRDVY.

The 139-residue stretch at 64-202 (VTLISASQTG…QAQQWRQQVV (139 aa)) folds into the Flavodoxin-like domain. FMN contacts are provided by residues 70 to 75 (SQTGNA), 117 to 120 (STQG), and 153 to 162 (LGDTSYEHFC). Residues 247-461 (TAPLTAQLSV…IEHNDNFRLP (215 aa)) form the FAD-binding FR-type domain. FAD is bound by residues threonine 335, lysine 369, 399 to 402 (RLYS), 417 to 419 (TVG), tyrosine 423, and 432 to 435 (GGAS). Residues 532–533 (SR), 538–542 (KIYVQ), and aspartate 574 each bind NADP(+). Tyrosine 612 provides a ligand contact to FAD.

This sequence belongs to the NADPH-dependent sulphite reductase flavoprotein subunit CysJ family. In the N-terminal section; belongs to the flavodoxin family. The protein in the C-terminal section; belongs to the flavoprotein pyridine nucleotide cytochrome reductase family. Alpha(8)-beta(8). The alpha component is a flavoprotein, the beta component is a hemoprotein. Requires FAD as cofactor. The cofactor is FMN.

It carries out the reaction hydrogen sulfide + 3 NADP(+) + 3 H2O = sulfite + 3 NADPH + 4 H(+). It participates in sulfur metabolism; hydrogen sulfide biosynthesis; hydrogen sulfide from sulfite (NADPH route): step 1/1. Functionally, component of the sulfite reductase complex that catalyzes the 6-electron reduction of sulfite to sulfide. This is one of several activities required for the biosynthesis of L-cysteine from sulfate. The flavoprotein component catalyzes the electron flow from NADPH -&gt; FAD -&gt; FMN to the hemoprotein component. The chain is Sulfite reductase [NADPH] flavoprotein alpha-component from Yersinia pestis bv. Antiqua (strain Nepal516).